The primary structure comprises 133 residues: Putative esterase TV1331 (133 aa).

The protein belongs to the thioesterase PaaI family.

The chain is Putative esterase TV1331 from Thermoplasma volcanium (strain ATCC 51530 / DSM 4299 / JCM 9571 / NBRC 15438 / GSS1).